Here is a 158-residue protein sequence, read N- to C-terminus: Cytochrome c2 (158 aa).

A Pyrrolidone carboxylic acid modification is found at Gln-1. Positions 18, 21, 22, and 102 each coordinate heme c. The tract at residues 129–158 is disordered; the sequence is AEAAPAADAAAPAAADAAAPAEPAAEGAAT.

It belongs to the cytochrome c family. Binds 1 heme c group covalently per subunit.

It is found in the periplasm. In terms of biological role, cytochrome c2 is found mainly in purple, non-sulfur, photosynthetic bacteria where it functions as the electron donor to the oxidized bacteriochlorophyll in the photophosphorylation pathway. However, it may also have a role in the respiratory chain and is found in some non-photosynthetic bacteria. The polypeptide is Cytochrome c2 (Fuscovulum blasticum (Rhodobacter blasticus)).